A 301-amino-acid polypeptide reads, in one-letter code: Probable alpha-L-glutamate ligase (301 aa).

Positions 104-287 (LQLLSRKGVG…IAGMIIEYIE (184 aa)) constitute an ATP-grasp domain. Residues Lys-141, 178–179 (EY), Asp-187, and 211–213 (RSN) contribute to the ATP site. Mg(2+)-binding residues include Asp-248, Glu-260, and Asn-262. Mn(2+)-binding residues include Asp-248, Glu-260, and Asn-262.

Belongs to the RimK family. Mg(2+) is required as a cofactor. Requires Mn(2+) as cofactor.

In Photobacterium profundum (strain SS9), this protein is Probable alpha-L-glutamate ligase.